Here is a 400-residue protein sequence, read N- to C-terminus: Spaetzle-processing enzyme (400 aa).

A signal peptide spans 1 to 27 (MASTERNFLLLSLVVSALSGLVHRSDA). The Clip domain maps to 34–94 (SCTPQQSDER…GLVNRILVCC (61 aa)). 6 disulfides stabilise this stretch: C35/C93, C46/C77, C52/C94, C127/C269, C166/C182, and C211/C221. In terms of domain architecture, Peptidase S1 spans 135–399 (IFGGTNTTLW…FIDWIKQKLE (265 aa)). N-linked (GlcNAc...) asparagine glycosylation occurs at N140. H181 acts as the Charge relay system in catalysis. The Ca(2+) site is built by E202, D204, T207, and D210. D249 functions as the Charge relay system in the catalytic mechanism. A glycan (N-linked (GlcNAc...) asparagine) is linked at N311. 2 disulfide bridges follow: C315–C332 and C342–C375. Residue S346 is the Charge relay system of the active site.

It belongs to the peptidase S1 family. CLIP subfamily. As to quaternary structure, in the active form, heterodimer of a light chain and a heavy chain; disulfide-linked. Proteolytically cleaved in response to Gram-negative bacterial or fungal infection; processing is likely to result in its activation. Cleavage produces a light chain containing the CLIP domain and a catalytic heavy chain which remain covalently associated through an interchain disulfide bond.

The protein resides in the secreted. Functionally, endopeptidase which plays a key role in innate immunity by cleaving Tl ligand spz and thereby activating the Toll pathway in response to fungal and Gram-positive bacterial infections. Acts downstream of pathogen recognition receptors PGRP-SA and GNBP1 and protease grass in response to Gram-positive bacterial infection. Acts downstream of protease psh in response to fungal infection. This Drosophila melanogaster (Fruit fly) protein is Spaetzle-processing enzyme.